A 464-amino-acid chain; its full sequence is Sugar transporter ERD6-like 1 (464 aa).

Helical transmembrane passes span 23–43, 72–92, 95–115, 125–145, 156–176, 180–200, 263–283, 298–318, 326–346, 359–379, 399–419, and 424–444; these read ITCGLLLSTSVAVTGSFVYGC, VMTLGGMITAAFSGKIAAVIG, QTMWIADVFCIFGWLAVAFAH, GFLGFGVGLISYVVPVYIAEI, FSNQLLQSFGISLMFFTGNFF, TLALLSAIPCGIQMICLFFIP, LIIGLGLMLLQQFCGSSAISA, IGTSILAVILVPQSIIVMFAV, LLMSSSIGLCICSFLIGLSYY, PILIVGLVGYVLSFGIGLGGL, LVTVSNWFFSWIIIFSFNFMM, and FGTYFIFAGVSLMSFVFVWTL.

It belongs to the major facilitator superfamily. Sugar transporter (TC 2.A.1.1) family.

The protein resides in the membrane. Functionally, sugar transporter. This is Sugar transporter ERD6-like 1 (SUGTL4) from Arabidopsis thaliana (Mouse-ear cress).